The sequence spans 124 residues: Small ribosomal subunit protein uS13 (124 aa).

Residues 95–124 (GLPVRGQRTKTNARTRKGPKRTVAGKKKAR) are disordered.

Belongs to the universal ribosomal protein uS13 family. As to quaternary structure, part of the 30S ribosomal subunit. Forms a loose heterodimer with protein S19. Forms two bridges to the 50S subunit in the 70S ribosome.

Functionally, located at the top of the head of the 30S subunit, it contacts several helices of the 16S rRNA. In the 70S ribosome it contacts the 23S rRNA (bridge B1a) and protein L5 of the 50S subunit (bridge B1b), connecting the 2 subunits; these bridges are implicated in subunit movement. Contacts the tRNAs in the A and P-sites. This Leifsonia xyli subsp. xyli (strain CTCB07) protein is Small ribosomal subunit protein uS13.